We begin with the raw amino-acid sequence, 341 residues long: GTPase Obg (341 aa).

Positions 1-159 (MKFLDQAKVY…RTLWLRLKLI (159 aa)) constitute an Obg domain. Residues 160 to 327 (ADAGLIGLPN…MLRAGAHMIE (168 aa)) enclose the OBG-type G domain. GTP-binding positions include 166–173 (GLPNAGKS), 191–195 (FTTLY), 212–215 (DIPG), 279–282 (SQID), and 308–310 (SAV). Positions 173 and 193 each coordinate Mg(2+).

It belongs to the TRAFAC class OBG-HflX-like GTPase superfamily. OBG GTPase family. Monomer. Requires Mg(2+) as cofactor.

Its subcellular location is the cytoplasm. Functionally, an essential GTPase which binds GTP, GDP and possibly (p)ppGpp with moderate affinity, with high nucleotide exchange rates and a fairly low GTP hydrolysis rate. Plays a role in control of the cell cycle, stress response, ribosome biogenesis and in those bacteria that undergo differentiation, in morphogenesis control. In Bartonella quintana (strain Toulouse) (Rochalimaea quintana), this protein is GTPase Obg.